Consider the following 606-residue polypeptide: Radial spoke head protein 3 homolog (606 aa).

The disordered stretch occupies residues 1–103 (MARSEARRQA…NSPEAPPLDG (103 aa)). Positions 15–46 (PRAVPEERALRERRQPRPRREPLESGAGDHRR) are enriched in basic and acidic residues. Phosphothreonine; by MAPK1 is present on Thr331. Residues 393-429 (AYEELRNIELAEVQRLEEQERRHREEKERRKQQQWQV) adopt a coiled-coil conformation. The segment at 520 to 606 (EGRHASVRPE…KSSKREELSQ (87 aa)) is disordered. Polar residues predominate over residues 547–556 (SQDQGASQAQ). The stretch at 572–604 (ARYAERVSSQERRLAEENDELTEMRKSSKREEL) forms a coiled coil. The span at 573-606 (RYAERVSSQERRLAEENDELTEMRKSSKREELSQ) shows a compositional bias: basic and acidic residues.

Belongs to the flagellar radial spoke RSP3 family. Component of the axonemal radial spoke 1 (RS1) and 2 (RS2) complexes, at least composed of spoke head proteins RSPH1, RSPH3, RSPH9 and the cilia-specific component RSPH4A or sperm-specific component RSPH6A, spoke stalk proteins RSPH14, DNAJB13, DYDC1, ROPN1L and NME5, and the RS1 complex-specific anchor protein IQUB. Interacts with IQUB. Interacts with phosphorylated MAPK1. Interacts with MEK1. Interacts with PKA regulatory subunits PRKAR1A and PRKAR1B. Interacts with RSPH1. Interacts with RSPH4A. Interacts with RSPH6A. Interacts with RSPH9. Interacts with LRRC23.

The protein resides in the cytoplasm. Its subcellular location is the cytoskeleton. It is found in the cilium axoneme. The protein localises to the flagellum axoneme. Its function is as follows. Functions as part of axonemal radial spoke complexes that play an important part in the motility of sperm and cilia. Functions as a protein kinase A-anchoring protein that scaffolds the cAMP-dependent protein kinase holoenzyme. May serve as a point of convergence for MAPK and PKA signaling in cilia. This is Radial spoke head protein 3 homolog (RSPH3) from Bos taurus (Bovine).